A 118-amino-acid polypeptide reads, in one-letter code: Co-chaperonin GroES (118 aa).

It belongs to the GroES chaperonin family. As to quaternary structure, heptamer of 7 subunits arranged in a ring. Interacts with the chaperonin GroEL.

The protein localises to the cytoplasm. In terms of biological role, together with the chaperonin GroEL, plays an essential role in assisting protein folding. The GroEL-GroES system forms a nano-cage that allows encapsulation of the non-native substrate proteins and provides a physical environment optimized to promote and accelerate protein folding. GroES binds to the apical surface of the GroEL ring, thereby capping the opening of the GroEL channel. The sequence is that of Co-chaperonin GroES from Helicobacter acinonychis (strain Sheeba).